Consider the following 220-residue polypeptide: MKLILRGIANEFIKSFSFKNFEIDQNFFDKLITKEAPAAANLITENEKINSYELAKLKLILEKHFIKLSNIYSNNRETVLSGKSLKINSTFLKIKDLENQLPLDPSYLKKDILHKGTVRSGDRISSNGDLFIIGDVNPGAIISANNNVYVWGKLFGIAFAGKNGNKNASVASLYLNPLQLRICEIVAIGPKEKPKGQHPEIAILEDNKIIIKPYFLNQNL.

It belongs to the MinC family. As to quaternary structure, interacts with MinD and FtsZ.

In terms of biological role, cell division inhibitor that blocks the formation of polar Z ring septums. Rapidly oscillates between the poles of the cell to destabilize FtsZ filaments that have formed before they mature into polar Z rings. Prevents FtsZ polymerization. This is Probable septum site-determining protein MinC from Prochlorococcus marinus subsp. pastoris (strain CCMP1986 / NIES-2087 / MED4).